The chain runs to 399 residues: MGGRGAIGVLRNGGGPKKKMGPGQGLGPGERITHARPPFSISQIKKAIPPHCFQRSLRRSFSYLLSDIALVSAFYYVADTYFHRLPHPLLHYLAWPVYWFCQGAVLTGMWGIAHDCGHHAFSDYQLVDDVVGFLIHSLVFVPYFSFKISHRRHHSNTSSVDRDEVFVPKPKAKMPWYFKYLTNPPARVFIIFITLTLGWPMYLTFNISGRYYGRFTSHFDPNSPIFSPKERVLVHISNAGLVATGYLLYRIAMAKGVGWLIRLYGVPLIVLNACVVLITALQHTHPSFPYYDSTEWDWLRGNLVTVDRDYGPIMNRVFHHITDTHVVHHLFPSMPHYNGKEATVAAKRILGEYYQFDGTPIWKAAWREFRECVYVEPDEDDGATSGSSSKGVFWYHNKL.

The disordered stretch occupies residues 11–30 (RNGGGPKKKMGPGQGLGPGE). The next 2 membrane-spanning stretches (helical) occupy residues 61–81 (FSYL…ADTY) and 93–113 (LAWP…WGIA). The Histidine box-1 signature appears at 114 to 118 (HDCGH). The chain crosses the membrane as a helical span at residues 126–146 (LVDDVVGFLIHSLVFVPYFSF). A Histidine box-2 motif is present at residues 150–154 (HRRHH). 3 helical membrane passes run 188-208 (VFII…FNIS), 232-252 (VLVH…YRIA), and 258-278 (GWLI…VVLI). The Histidine box-3 signature appears at 325-329 (HVVHH).

The protein belongs to the fatty acid desaturase type 1 family. As to expression, expressed in developing seeds, but not in leaves.

It is found in the membrane. The catalysed reaction is a (9Z,12Z)-octadecadienoyl-containing glycerolipid + 2 Fe(II)-[cytochrome b5] + O2 + 2 H(+) = a (9Z,11E,13E)-octadecatrienoyl-containing glycerolipid + 2 Fe(III)-[cytochrome b5] + 2 H2O. It catalyses the reaction (9Z,12Z,15Z)-octadecatrienoyl-containing glycerolipid + 2 Fe(II)-[cytochrome b5] + O2 + 2 H(+) = a (9Z,11E,13E,15Z)-octadecatetraenoyl-containing glycerolipid + 2 Fe(III)-[cytochrome b5] + 2 H2O. It functions in the pathway lipid metabolism; polyunsaturated fatty acid biosynthesis. Converts linoleic acid to alpha-eleostearic acid (18:3(9Z,11E,13E)) and alpha-linolenic acid to alpha-parinaric acid (18:4(9Z,11E, 13E, 15Z)). Converts a single cis double bond at carbon 12 to two conjugated trans bonds at positions 11 and 13. In Momordica charantia (Bitter gourd), this protein is Delta(12) acyl-lipid conjugase (11E,13E-forming).